Here is a 296-residue protein sequence, read N- to C-terminus: tRNA U34 carboxymethyltransferase (296 aa).

Residues K64, W78, K83, G102, 124–126 (DPS), 151–152 (VE), Y171, and R286 each bind carboxy-S-adenosyl-L-methionine.

Belongs to the class I-like SAM-binding methyltransferase superfamily. CmoB family. Homotetramer.

It catalyses the reaction carboxy-S-adenosyl-L-methionine + 5-hydroxyuridine(34) in tRNA = 5-carboxymethoxyuridine(34) in tRNA + S-adenosyl-L-homocysteine + H(+). Functionally, catalyzes carboxymethyl transfer from carboxy-S-adenosyl-L-methionine (Cx-SAM) to 5-hydroxyuridine (ho5U) to form 5-carboxymethoxyuridine (cmo5U) at position 34 in tRNAs. The polypeptide is tRNA U34 carboxymethyltransferase (Sulfurimonas denitrificans (strain ATCC 33889 / DSM 1251) (Thiomicrospira denitrificans (strain ATCC 33889 / DSM 1251))).